We begin with the raw amino-acid sequence, 160 residues long: Globin CTT-II beta (160 aa).

The first 15 residues, M1–A15, serve as a signal peptide directing secretion. In terms of domain architecture, Globin spans P17 to L160. Residues H75 and H110 each contribute to the heme b site.

It belongs to the globin family. As to quaternary structure, homodimer.

This is Globin CTT-II beta from Chironomus thummi thummi (Midge).